A 120-amino-acid polypeptide reads, in one-letter code: MFSDLCDAGLLESLCLMRMCRHLTRTGWSLKCLCSWSLLVPSGSSHCECFVSGLKKYSLFLDLLYLTVHGVGSPVLDATSDGIGASLWCRSRLCVGISTTMIIQVLFLLRSKGKRYDTRS.

Residues 93 to 109 traverse the membrane as a helical segment; the sequence is LCVGISTTMIIQVLFLL.

The protein resides in the membrane. This is an uncharacterized protein from Saccharomyces cerevisiae (strain ATCC 204508 / S288c) (Baker's yeast).